Consider the following 508-residue polypeptide: Lysine--tRNA ligase (508 aa).

The Mg(2+) site is built by glutamate 418 and glutamate 425.

It belongs to the class-II aminoacyl-tRNA synthetase family. In terms of assembly, homodimer. Mg(2+) is required as a cofactor.

It is found in the cytoplasm. It catalyses the reaction tRNA(Lys) + L-lysine + ATP = L-lysyl-tRNA(Lys) + AMP + diphosphate. This Burkholderia pseudomallei (strain 1710b) protein is Lysine--tRNA ligase.